A 93-amino-acid polypeptide reads, in one-letter code: Putative pterin-4-alpha-carbinolamine dehydratase (93 aa).

The protein belongs to the pterin-4-alpha-carbinolamine dehydratase family.

It catalyses the reaction (4aS,6R)-4a-hydroxy-L-erythro-5,6,7,8-tetrahydrobiopterin = (6R)-L-erythro-6,7-dihydrobiopterin + H2O. The protein is Putative pterin-4-alpha-carbinolamine dehydratase of Trichormus variabilis (strain ATCC 29413 / PCC 7937) (Anabaena variabilis).